Reading from the N-terminus, the 295-residue chain is MTLKKILIVSGTHGNEINPVWAINQFNKQFKTIDKNIEYKFVIGNPLAYERGCRYIDNDLNRSFTSIQDNSIYETNRANFLVEKFGFNGSEPCDVAIDLHTTTANMGTSIVMYGRRMKDFCLAALLQHKFGLPIYLHEKDLKQTGFLVEAWPCGLVLEIGSVAQNFYDPKIINRFLIIISSLRDEINKLKNNQIRLPKDLFVHVHQGSIDYPRDKNGNINALIHPERINQDWKPIKKDAPLFMDMEGKTKTYADEDTIWPVFIGEVAYKEKNIAMSFTKKEVVSVSDQMYEEFFS.

Zn(2+)-binding residues include histidine 13 and glutamate 16. Substrate-binding positions include arginine 54 and 61 to 62; that span reads NR. Histidine 100 is a Zn(2+) binding site. Residues glutamate 158 and tyrosine 268 each coordinate substrate.

It belongs to the AspA/AstE family. Aspartoacylase subfamily. Zn(2+) serves as cofactor.

It carries out the reaction an N-acyl-L-aspartate + H2O = a carboxylate + L-aspartate. This chain is Probable aspartoacylase, found in Prochlorococcus marinus subsp. pastoris (strain CCMP1986 / NIES-2087 / MED4).